A 286-amino-acid chain; its full sequence is Aldo-keto reductase MAP_4149 (286 aa).

The active-site Proton donor is Tyr-61. 7 residues coordinate NADPH: Leu-201, Val-203, Val-239, Arg-241, Ser-242, Arg-247, and Asn-251.

It belongs to the aldo/keto reductase family.

This Mycolicibacterium paratuberculosis (strain ATCC BAA-968 / K-10) (Mycobacterium paratuberculosis) protein is Aldo-keto reductase MAP_4149.